We begin with the raw amino-acid sequence, 195 residues long: MEKFTIHTGTAAPLRRSNVDTDQIIPAVYLKRVTRTGFADGLFSGWREDQGFVLNDESYSDASILVAGPEFGTGSSREHAVWALRDWGFRAVLSPRFGDIFRGNALKGGLLPVELELEAIEEIWNRVEADPRTPVTVDLDARQVRVGEATWSFALDEFSRWRLMEGLDDIGLTLRHEVVIGDFEASRPPFLPTVT.

Belongs to the LeuD family. LeuD type 1 subfamily. As to quaternary structure, heterodimer of LeuC and LeuD.

It carries out the reaction (2R,3S)-3-isopropylmalate = (2S)-2-isopropylmalate. It participates in amino-acid biosynthesis; L-leucine biosynthesis; L-leucine from 3-methyl-2-oxobutanoate: step 2/4. Catalyzes the isomerization between 2-isopropylmalate and 3-isopropylmalate, via the formation of 2-isopropylmaleate. The chain is 3-isopropylmalate dehydratase small subunit from Salinispora arenicola (strain CNS-205).